Here is a 499-residue protein sequence, read N- to C-terminus: Heparin cofactor 2 (499 aa).

The N-terminal stretch at 1–19 (MKHSLNALLIFLIITSAWG) is a signal peptide. The residue at position 37 (Ser-37) is a Phosphoserine; by FAM20C. An N-linked (GlcNAc...) (complex) asparagine glycan is attached at Asn-49. Residues 68-79 (DWIPEGEEDDDY) are chemotactic activity. A run of 2 repeats spans residues 73 to 83 (GEEDDDYLDLE) and 87 to 97 (SEDDDYIDIVD). The 2 X 11 AA approximate repeats, Asp/Glu-rich (acidic) (hirudin-like) stretch occupies residues 73 to 97 (GEEDDDYLDLEKIFSEDDDYIDIVD). Residues Tyr-79 and Tyr-92 each carry the sulfotyrosine modification. Asn-188 is a glycosylation site (N-linked (GlcNAc...) asparagine). A glycosaminoglycan-binding site region spans residues 192 to 212 (KYEITTIHNLFRKLTHRLFRR). N-linked (GlcNAc...) asparagine glycosylation occurs at Asn-387.

It belongs to the serpin family. In terms of processing, phosphorylated by FAM20C in the extracellular medium. Expressed predominantly in liver. Also present in plasma. As to expression, expressed in plasma (at protein level). Expressed in liver.

Its function is as follows. Thrombin inhibitor activated by the glycosaminoglycans, heparin or dermatan sulfate. In the presence of the latter, HC-II becomes the predominant thrombin inhibitor in place of antithrombin III (AT-III). Also inhibits chymotrypsin, but in a glycosaminoglycan-independent manner. In terms of biological role, peptides at the N-terminal of HC-II have chemotactic activity for both monocytes and neutrophils. Shows negligible inhibition, in vitro, of thrombin and tPA and no inhibition of factor Xa, in vitro. The protein is Heparin cofactor 2 (SERPIND1) of Homo sapiens (Human).